The sequence spans 275 residues: Envelope glycoprotein (275 aa).

Disulfide bonds link Cys1–Cys10, Cys18–Cys27, and Cys58–Cys62. Asn122 carries N-linked (GlcNAc...) asparagine; by host glycosylation. Intrachain disulfides connect Cys164-Cys194, Cys187-Cys239, Cys204-Cys209, and Cys240-Cys245.

Belongs to the hantavirus envelope glycoprotein family. As to quaternary structure, homodimer. Homotetramer; forms heterotetrameric Gn-Gc spikes in the pre-fusion conformation. Homotrimer; forms homotrimer in the post-fusion conformation at acidic pH. Interacts (via C-terminus) with the nucleoprotein. In terms of processing, envelope polyprotein precursor is quickly cleaved in vivo just after synthesis, presumably by host signal peptidase.

It is found in the virion membrane. Its subcellular location is the host cell surface. The protein resides in the host Golgi apparatus membrane. It localises to the host endoplasmic reticulum membrane. Its function is as follows. Forms homotetramers with glycoprotein N at the surface of the virion. Attaches the virion to host cell receptors including integrin ITGAV/ITGB3. This attachment induces virion internalization predominantly through clathrin-dependent endocytosis. Class II fusion protein that promotes fusion of viral membrane with host endosomal membrane after endocytosis of the virion. The polypeptide is Envelope glycoprotein (GP) (Homo sapiens (Human)).